The sequence spans 482 residues: Retinoic acid receptor beta (482 aa).

The segment at 1-114 (MSTSSHACPV…PLPPPRVYKP (114 aa)) is modulating. Phosphoserine is present on Ser-104. 2 consecutive NR C4-type zinc fingers follow at residues 115–135 (CFVC…CEGC) and 151–175 (CHRD…LQKC). Positions 115–180 (CFVCQDKSSG…RLQKCFEVGM (66 aa)) form a DNA-binding region, nuclear receptor. Positions 181–209 (SKESVRNDRNKKKKEPSKQECTESYEMTA) are hinge. In terms of domain architecture, NR LBD spans 210 to 444 (ELDDLTEKIR…PLIQEMLENS (235 aa)). The disordered stretch occupies residues 443–482 (NSEGHEPLTPSSSGNIAEHSPSVSPSSVENSGVSQSPLLQ). Residues 462–482 (SPSVSPSSVENSGVSQSPLLQ) show a composition bias toward low complexity.

This sequence belongs to the nuclear hormone receptor family. NR1 subfamily. In terms of assembly, homodimer. Heterodimer; with a RXR molecule. Binds DNA preferentially as a RAR/RXR heterodimer. Heterodimerizes (via NR LBD) with RXRA. Interacts weakly with NCOR2.

Its subcellular location is the nucleus. It localises to the cytoplasm. Functionally, receptor for retinoic acid. Retinoic acid receptors bind as heterodimers to their target response elements in response to their ligands, all-trans or 9-cis retinoic acid, and regulate gene expression in various biological processes. The RAR/RXR heterodimers bind to the retinoic acid response elements (RARE) composed of tandem 5'-AGGTCA-3' sites known as DR1-DR5. In the absence of ligand, acts mainly as an activator of gene expression due to weak binding to corepressors. The RXRA/RARB heterodimer can act as a repressor on the DR1 element and as an activator on the DR5 element. In concert with RARG, required for skeletal growth, matrix homeostasis and growth plate function. The sequence is that of Retinoic acid receptor beta (Rarb) from Mus musculus (Mouse).